Reading from the N-terminus, the 133-residue chain is Nucleoside diphosphate kinase (133 aa).

Lysine 9, phenylalanine 57, arginine 85, threonine 91, arginine 102, and asparagine 112 together coordinate ATP. Histidine 115 functions as the Pros-phosphohistidine intermediate in the catalytic mechanism.

The protein belongs to the NDK family. Homotetramer. Mg(2+) is required as a cofactor.

It is found in the cytoplasm. It carries out the reaction a 2'-deoxyribonucleoside 5'-diphosphate + ATP = a 2'-deoxyribonucleoside 5'-triphosphate + ADP. The catalysed reaction is a ribonucleoside 5'-diphosphate + ATP = a ribonucleoside 5'-triphosphate + ADP. Its function is as follows. Major role in the synthesis of nucleoside triphosphates other than ATP. The ATP gamma phosphate is transferred to the NDP beta phosphate via a ping-pong mechanism, using a phosphorylated active-site intermediate. The protein is Nucleoside diphosphate kinase of Rubrobacter xylanophilus (strain DSM 9941 / JCM 11954 / NBRC 16129 / PRD-1).